The following is a 390-amino-acid chain: MATGDLKRSLRNLEQVLRLLNYPEEVDCVGLIKGDPAASLPIISYSFTSYSPYVTELIMESNVELIAKNDLRFIDAVYKLLRDQFNYKPILTKKQFIQCGFAEWKIQIVCDILNCVMKKHKELSSLQKIPSQQRKKISSGKSEPSLSNEKISAEAVGVDTSGRFVTSGKKKAVVIRHLYNEDNVEISEDTLSPITGVNEAVDVSDLNATEIKMPEVKVPEIKAEQQDINVNPEITALQTMLAECQEKLKELTLIEKRLDCLEQKMKGNVMVDENTWTNLLSRVTLLETEMLLSKKNDEYVEFNEINEDCASCSNMDLLNPHRKNKVGRPASIPLSSRYSTASSDSTPRASTINYCGLNEISEETTIQKMERMKKMFEETAELLKCPNHYL.

The tract at residues 11–195 (RNLEQVLRLL…ISEDTLSPIT (185 aa)) is binds with microtubules and centrioles. A coiled-coil region spans residues 233-267 (EITALQTMLAECQEKLKELTLIEKRLDCLEQKMKG). The disordered stretch occupies residues 323–347 (KNKVGRPASIPLSSRYSTASSDSTP). 2 positions are modified to phosphoserine: Ser-331 and Ser-345. Low complexity predominate over residues 335 to 345 (SSRYSTASSDS). Residue Thr-346 is modified to Phosphothreonine. Residues 361 to 385 (SEETTIQKMERMKKMFEETAELLKC) adopt a coiled-coil conformation.

In terms of assembly, interacts with CROCC. Interacts with POC1B; the interaction is direct and recruits POC1B to centriolar microtubules. Binds to centriolar microtubules.

It is found in the cytoplasm. The protein localises to the cytoskeleton. Its subcellular location is the microtubule organizing center. It localises to the centrosome. The protein resides in the centriole. It is found in the spindle pole. The protein localises to the midbody. Its function is as follows. Centriole-enriched microtubule-binding protein involved in centriole biogenesis. In collaboration with CEP295 and POC1B, is required for the centriole-to-centrosome conversion by ensuring the formation of bona fide centriole wall. Functions as a linker component that maintains centrosome cohesion. Associates with CROCC and regulates its stability and localization to the centrosome. This chain is Centrosomal protein of 44 kDa (CEP44), found in Macaca fascicularis (Crab-eating macaque).